The chain runs to 211 residues: Urease accessory protein UreE (211 aa).

The interval glutamate 170 to aspartate 211 is disordered. Residues histidine 176–histidine 196 are compositionally biased toward basic and acidic residues.

The protein belongs to the UreE family.

The protein resides in the cytoplasm. Functionally, involved in urease metallocenter assembly. Binds nickel. Probably functions as a nickel donor during metallocenter assembly. This chain is Urease accessory protein UreE, found in Ralstonia nicotianae (strain ATCC BAA-1114 / GMI1000) (Ralstonia solanacearum).